The following is a 690-amino-acid chain: Xylosyl- and glucuronyltransferase LARGE2 (690 aa).

Residues 1-8 (MLPRGRPR) lie on the Cytoplasmic side of the membrane. The helical; Signal-anchor for type II membrane protein transmembrane segment at 9–29 (AMGAAVLLLLLLLVVGFFLFG) threads the bilayer. At 30–690 (RDPDYGLGTT…TALQQARSRA (661 aa)) the chain is on the lumenal side. Residues Asn-51 and Asn-78 are each glycosylated (N-linked (GlcNAc...) asparagine). Positions 68–343 (LHVAIVCAGY…FLGYDGKLLR (276 aa)) are xylosyltransferase activity. Residues Asp-172 and Asp-174 each coordinate Mn(2+). Asn-202 carries an N-linked (GlcNAc...) asparagine glycan. The tract at residues 344 to 686 (RELFGCPNQF…LKYLTALQQA (343 aa)) is glucuronyltransferase activity. Positions 492 and 494 each coordinate Mn(2+).

This sequence in the C-terminal section; belongs to the glycosyltransferase 49 family. The protein in the N-terminal section; belongs to the glycosyltransferase 8 family. Belongs to the glycosyltransferase 8 family. In terms of assembly, interacts with B4GAT1. It depends on Mn(2+) as a cofactor. Highly expressed in the testis and kidney, but weakly expressed in the heart and brain. Expressed during embryogenesis from 7 dpc.

It localises to the golgi apparatus membrane. The catalysed reaction is 3-O-[beta-D-GlcA-(1-&gt;3)-beta-D-Xyl-(1-&gt;4)-Rib-ol-P-Rib-ol-P-3-beta-D-GalNAc-(1-&gt;3)-beta-D-GlcNAc-(1-&gt;4)-(O-6-P-alpha-D-Man)]-Thr-[protein] + UDP-alpha-D-xylose = 3-O-[alpha-D-Xyl-(1-&gt;3)-beta-D-GlcA-(1-&gt;4)-beta-D-Xyl-(1-&gt;4)-Rib-ol-P-Rib-ol-P-3-beta-D-GalNAc-(1-&gt;3)-beta-D-GlcNAc-(1-&gt;4)-(O-6-P-alpha-D-Man)]-Thr-[protein] + UDP + H(+). It catalyses the reaction 3-O-{(1-&gt;[3)-alpha-D-Xyl-(1-&gt;3)-beta-D-GlcA-(1-&gt;](n)-4)-beta-D-Xyl-(1-&gt;4)-Rib-ol-P-Rib-ol-P-3-beta-D-GalNAc-(1-&gt;3)-beta-D-GlcNAc-(1-&gt;4)-O-6-P-alpha-D-Man}-L-Thr-[protein] + UDP-alpha-D-glucuronate = 3-O-{beta-D-GlcA-(1-&gt;[3)-alpha-D-Xyl-(1-&gt;3)-beta-D-GlcA-(1-&gt;](n)-4)-beta-D-Xyl-(1-&gt;4)-Rib-ol-P-Rib-ol-P-3-beta-D-GalNAc-(1-&gt;3)-beta-D-GlcNAc-(1-&gt;4)-O-6-P-alpha-D-Man}-L-Thr-[protein] + UDP + H(+). The enzyme catalyses 3-O-{beta-D-GlcA-(1-&gt;[3)-alpha-D-Xyl-(1-&gt;3)-beta-D-GlcA-(1-&gt;](n)-4)-beta-D-Xyl-(1-&gt;4)-Rib-ol-P-Rib-ol-P-3-beta-D-GalNAc-(1-&gt;3)-beta-D-GlcNAc-(1-&gt;4)-O-6-P-alpha-D-Man}-L-Thr-[protein] + UDP-alpha-D-xylose = 3-O-{(1-&gt;[3)-alpha-D-Xyl-(1-&gt;3)-beta-D-GlcA-(1-&gt;](n+1)-4)-beta-D-Xyl-(1-&gt;4)-Rib-ol-P-Rib-ol-P-3-beta-D-GalNAc-(1-&gt;3)-beta-D-GlcNAc-(1-&gt;4)-O-6-P-alpha-D-Man}-L-Thr-[protein] + UDP + H(+). The protein operates within protein modification; protein glycosylation. Its function is as follows. Bifunctional glycosyltransferase with both alpha-1,3-xylosyltransferase and beta-1,3-glucuronyltransferase activities involved in the maturation of alpha-dystroglycan (DAG1) by glycosylation leading to DAG1 binding to laminin G-like domain-containing extracellular proteins with high affinity and in a phosphorylated-O-mannosyl trisaccharide dependent manner. Elongates the glucuronyl-beta-1,4-xylose-beta disaccharide primer structure by adding repeating units [-3-Xylose-alpha-1,3-GlcA-beta-1-] to produce a heteropolysaccharide. Supports the maturation of DAG1 more effectively than LARGE1. In addition, can modify both heparan sulfate (HS)- and chondroitin/dermatan sulfate (CS/DS)-proteoglycans (PGs), namely GPC4, with a glycosaminoglycan (GAG)-like polysaccharide composed of xylose and glucuronic acid to confer laminin binding. This Mus musculus (Mouse) protein is Xylosyl- and glucuronyltransferase LARGE2.